The chain runs to 80 residues: Pancreatic polypeptide (80 aa).

The signal sequence occupies residues 1–25 (MPPRWASLLLLACSLLLLAVPPGTA). Tyrosine amide is present on Tyr61. Residues 65–80 (SSSRVLCEEPMGAAGC) constitute a propeptide that is removed on maturation.

Belongs to the NPY family.

The protein resides in the secreted. In terms of biological role, hormone secreted by pancreatic cells that acts as a regulator of pancreatic and gastrointestinal functions. The protein is Pancreatic polypeptide (PPY) of Gallus gallus (Chicken).